The primary structure comprises 123 residues: Snaclec GPIB-binding protein subunit beta (123 aa).

3 disulfide bridges follow: C2–C13, C30–C119, and C96–C111. The C-type lectin domain occupies 9–120; the sequence is YGGHCYKLFK…CTRLQYFVCE (112 aa).

It belongs to the snaclec family. As to quaternary structure, heterodimer of subunits alpha and beta; disulfide-linked. In terms of tissue distribution, expressed by the venom gland.

The protein resides in the secreted. In terms of biological role, binds to platelet GPIb (subunit alpha) (GP1BA) and functions as a receptor blocker for vWF binding to GPIb. The platelet GPIb-binding site resides on the GPIB-BP subunit beta and not on the alpha subunit. At a final concentration of 104 nM totally abolishes vWF-dependent shear-induced platelet aggregation (SIPA) at a high shear stress, but had no effect on SIPA at a low shear stress. In Bothrops jararaca (Jararaca), this protein is Snaclec GPIB-binding protein subunit beta.